The sequence spans 87 residues: Glutaredoxin 1 (87 aa).

The region spanning 1-87 (MFTVIFGRPG…WAKENLNLFA (87 aa)) is the Glutaredoxin domain. Cysteine 11 and cysteine 14 are joined by a disulfide.

This sequence belongs to the glutaredoxin family. In terms of assembly, monomer.

In terms of biological role, the disulfide bond functions as an electron carrier in the glutathione-dependent synthesis of deoxyribonucleotides by the enzyme ribonucleotide reductase. In addition, it is also involved in reducing some disulfides in a coupled system with glutathione reductase. The polypeptide is Glutaredoxin 1 (grxA) (Salmonella typhi).